Reading from the N-terminus, the 475-residue chain is METETNFKIYNPLQQLEQGSIGGGSGSIPAGSVTGGAGGSIANATITNINIAAGTITGGSGGNIAAGTITGGSGGNIAPNTITAGELAAGAAAANINSGPAGAVNGSKVSKADNTNFGVIEFDPSGDLTQTAAGSGIAVLKTGAAAANINAGPAGAINSSQIAGGPFLSSSPGSVTGGPGGNIAAGTVTGGSGGDLAAGTVTGGAGGNIAAGTVTGGAGGNIAANTITAGELAAGAAAANINSGPAGAVNGSQISKADNTNFGVIEFDPSGDLKQTAAGSGIALVKQPAAGTSVTIAGFDSSGTFITSKVGSIVAAAVPNGTSLNFYNIMIRYPTVAPISLQISVAAVGAAPPPGPGFIGIGEQRWIVNTTINPNPPPPANPNPGTTPYLRTESRVTQNSVAVGTFSYLNVNNVATGAISALATPWDNSEQTVQGGAYERYEFYINDGVDASGYRVTAFYFSPSSFITIERLQGN.

This is an uncharacterized protein from Acheta domesticus (House cricket).